Reading from the N-terminus, the 183-residue chain is CASP-like protein UU1 (183 aa).

Residues 1-33 (MEESQQQSTKFDAPPSPYVPSRVYLAQIYWKKP) are Cytoplasmic-facing. Residues 34–54 (AIVVLRVLQFVFSLIAFSVMA) traverse the membrane as a helical segment. Over 55-72 (DLLHDVQGSIKSLSYTVA) the chain is Extracellular. A helical transmembrane segment spans residues 73 to 93 (IGVLACAYALAQLSFSLWCVI). Topologically, residues 94–118 (RGATSSSGVTPLYQYATFICDQMST) are cytoplasmic. Residues 119–139 (YFLISAASATATLIDVSGVCG) form a helical membrane-spanning segment. Over 140–156 (SNGSGTNLCSRSTASVT) the chain is Extracellular. A glycan (N-linked (GlcNAc...) asparagine) is linked at Asn-141. Residues 157–177 (FAFLAFLAFSASSVLTGYYLV) form a helical membrane-spanning segment. Over 178–183 (KCILKA) the chain is Cytoplasmic.

The protein belongs to the Casparian strip membrane proteins (CASP) family. Homodimer and heterodimers.

It is found in the cell membrane. This chain is CASP-like protein UU1, found in Selaginella moellendorffii (Spikemoss).